Here is a 327-residue protein sequence, read N- to C-terminus: Toluene-4-monooxygenase system, hydroxylase component subunit beta (327 aa).

It belongs to the TmoE/XamoE family. The alkene monooxygenase multicomponent enzyme system is composed of an electron transfer component and a monooxygenase component interacting with the effector protein TmoD. The electron transfer component is composed of a ferredoxin reductase (TmoF) and a ferredoxin (TmoC), and the monooxygenase component is formed by a heterohexamer (dimer of heterotrimers) of two alpha subunits (TmoA), two beta subunits (TmoE) and two gamma subunits (TmoB).

It carries out the reaction toluene + NADH + O2 + H(+) = 4-methylphenol + NAD(+) + H2O. Its pathway is xenobiotic degradation; toluene degradation. Its activity is regulated as follows. Inhibited by Zn(2+) and Cu(2+). Component of the toluene-4-monooxygenase multicomponent enzyme system which catalyzes the O2- and NADH-dependent hydroxylation of toluene to form p-cresol. Also able to convert benzene to phenol, catechol, and 1,2,3-trihydroxybenzene by successive hydroxylations. This is Toluene-4-monooxygenase system, hydroxylase component subunit beta from Ectopseudomonas mendocina (Pseudomonas mendocina).